The sequence spans 135 residues: Lymphocyte antigen 6 complex locus protein G6d (135 aa).

The signal sequence occupies residues 1-19; the sequence is MNSQLVGILLSALLGVALG. A UPAR/Ly6 domain is found at 22–121; that stretch reads TRCYDCGGGP…ASSVTPLCIL (100 aa). 5 disulfides stabilise this stretch: Cys24–Cys48, Cys27–Cys35, Cys42–Cys76, Cys82–Cys101, and Cys102–Cys107. O-linked (GalNAc...) threonine glycosylation is present at Thr68. Residue Asn108 is the site of GPI-anchor amidated asparagine attachment. Positions 109 to 135 are cleaved as a propeptide — removed in mature form; it reads SAVASSVTPLCILAAAVTTLAWLLPGL.

Homodimer. O-glycosylated. Expressed in embryonic tissue and adult lung, kidney, brain, liver and spleen.

It is found in the cell membrane. The protein resides in the cell projection. It localises to the filopodium. The protein is Lymphocyte antigen 6 complex locus protein G6d (Ly6g6d) of Mus musculus (Mouse).